The sequence spans 351 residues: Uroporphyrinogen decarboxylase (351 aa).

Residues Arg-25–Arg-29, Asp-74, Tyr-151, Ser-206, and His-325 each bind substrate.

Belongs to the uroporphyrinogen decarboxylase family. Homodimer.

The protein resides in the cytoplasm. The enzyme catalyses uroporphyrinogen III + 4 H(+) = coproporphyrinogen III + 4 CO2. The protein operates within porphyrin-containing compound metabolism; protoporphyrin-IX biosynthesis; coproporphyrinogen-III from 5-aminolevulinate: step 4/4. Functionally, catalyzes the decarboxylation of four acetate groups of uroporphyrinogen-III to yield coproporphyrinogen-III. In Chlorobium phaeovibrioides (strain DSM 265 / 1930) (Prosthecochloris vibrioformis (strain DSM 265)), this protein is Uroporphyrinogen decarboxylase.